We begin with the raw amino-acid sequence, 66 residues long: COP-associated protein (66 aa).

One can recognise an HMA domain in the interval 1-66; the sequence is MKATFQVPSI…ALLDAGQEVV (66 aa). Residues Cys-12 and Cys-15 each contribute to the Cu cation site. A disulfide bond links Cys-12 and Cys-15.

Functionally, part of a cation-transporting system which is associated with copper export out of the H.pylori cells. In Helicobacter pylori (strain ATCC 700392 / 26695) (Campylobacter pylori), this protein is COP-associated protein (copP).